Consider the following 479-residue polypeptide: MEPNFYLSLLLLFVTFISLSLFFIFYKQKSPLNLPPGKMGYPIIGESLEFLSTGWKGHPEKFIFDRMRKYSSELFKTSIVGESTVVCCGAASNKFLFSNENKLVTAWWPDSVNKIFPTTSLDSNLKEESIKMRKLLPQFFKPEALQRYVGVMDVIAQRHFVTHWDNKNEITVYPLAKRYTFLLACRLFMSVEDENHVAKFSDPFQLIAAGIISLPIDLPGTPFNKAIKASNFIRKELIKIIKQRRVDLAEGTASPTQDILSHMLLTSDENGKSMNELNIADKILGLLIGGHDTASVACTFLVKYLGELPHIYDKVYQEQMEIAKSKPAGELLNWDDLKKMKYSWNVACEVMRLSPPLQGGFREAITDFMFNGFSIPKGWKLYWSANSTHKNAECFPMPEKFDPTRFEGNGPAPYTFVPFGGGPRMCPGKEYARLEILVFMHNLVKRFKWEKVIPDEKIIVDPFPIPAKDLPIRLYPHKA.

The chain crosses the membrane as a helical span at residues 5–25 (FYLSLLLLFVTFISLSLFFIF). C426 provides a ligand contact to heme.

Belongs to the cytochrome P450 family. It depends on heme as a cofactor. Expressed in roots, nodules and flowers.

Its subcellular location is the membrane. It catalyses the reaction beta-amyrin + 3 reduced [NADPH--hemoprotein reductase] + 3 O2 = oleanolate + 3 oxidized [NADPH--hemoprotein reductase] + 4 H2O + 4 H(+). In terms of biological role, catalyzes the carboxylation of beta-amyrin at the C-28 position to form oleanolic acid. Involved in an early step in the hemolytic saponin biosynthetic pathway. Catalyzes the carboxylation of alpha-amyrin and lupeol at the C-28 position to form ursolic acid and betulinic acid respectively. This chain is Beta-amyrin 28-monooxygenase, found in Medicago truncatula (Barrel medic).